The chain runs to 468 residues: ATP synthase subunit beta (468 aa).

Residue 148-155 coordinates ATP; it reads GGAGVGKT.

The protein belongs to the ATPase alpha/beta chains family. As to quaternary structure, F-type ATPases have 2 components, CF(1) - the catalytic core - and CF(0) - the membrane proton channel. CF(1) has five subunits: alpha(3), beta(3), gamma(1), delta(1), epsilon(1). CF(0) has three main subunits: a(1), b(2) and c(9-12). The alpha and beta chains form an alternating ring which encloses part of the gamma chain. CF(1) is attached to CF(0) by a central stalk formed by the gamma and epsilon chains, while a peripheral stalk is formed by the delta and b chains.

It localises to the cell inner membrane. The enzyme catalyses ATP + H2O + 4 H(+)(in) = ADP + phosphate + 5 H(+)(out). In terms of biological role, produces ATP from ADP in the presence of a proton gradient across the membrane. The catalytic sites are hosted primarily by the beta subunits. This chain is ATP synthase subunit beta, found in Xanthomonas euvesicatoria pv. vesicatoria (strain 85-10) (Xanthomonas campestris pv. vesicatoria).